The following is a 1887-amino-acid chain: Fatty acid synthase subunit alpha (1887 aa).

Lys-37 participates in a covalent cross-link: Glycyl lysine isopeptide (Lys-Gly) (interchain with G-Cter in ubiquitin). The residue at position 50 (Ser-50) is a Phosphoserine. The tract at residues 96–120 is disordered; it reads ELAAKEEPAKEEAPAPTPAASAPAP. Basic and acidic residues predominate over residues 98–108; it reads AAKEEPAKEEA. The region spanning 145–220 is the Carrier domain; sequence VKASLLLHVL…ETFQDTFSGA (76 aa). Ser-180 is subject to O-(pantetheine 4'-phosphoryl)serine. Ser-523 bears the Phosphoserine mark. The segment at 675-874 is beta-ketoacyl reductase; it reads DKYVLITGAG…CGAIIGWTRG (200 aa). Ser-958 carries the phosphoserine modification. In terms of domain architecture, Ketosynthase family 3 (KS3) spans 1123–1657; that stretch reads QEVIVEEDLE…QKGGQAIVVH (535 aa). Cys-1305 serves as the catalytic For beta-ketoacyl synthase activity. A Phosphoserine modification is found at Ser-1440. Catalysis depends on for beta-ketoacyl synthase activity residues His-1542 and His-1583. Mg(2+) is bound by residues Asp-1772, Val-1773, and Glu-1774. Acetyl-CoA contacts are provided by residues 1772-1774, Tyr-1798, Ser-1808, 1817-1827, 1841-1844, and 1871-1873; these read DVE, EAVFKSLGVKS, RVNK, and ISH. 2 residues coordinate Mg(2+): Ser-1872 and His-1873.

This sequence belongs to the thiolase-like superfamily. Fungal fatty acid synthetase subunit alpha family. [Alpha(6)beta(6)] hexamers of two multifunctional subunits (alpha and beta). 4'-phosphopantetheine is transferred from CoA to a specific serine of the Acyl carrier domain by the C-terminal PPT domain. This modification is essential for activity because fatty acids are bound in thioester linkage to the sulfhydryl of the prosthetic group.

It carries out the reaction acetyl-CoA + n malonyl-CoA + 2n NADPH + 4n H(+) = a long-chain-acyl-CoA + n CoA + n CO2 + 2n NADP(+).. The catalysed reaction is a fatty acyl-[ACP] + malonyl-[ACP] + H(+) = a 3-oxoacyl-[ACP] + holo-[ACP] + CO2. The enzyme catalyses a (3R)-hydroxyacyl-[ACP] + NADP(+) = a 3-oxoacyl-[ACP] + NADPH + H(+). Inhibited by cerulenin by covalent binding to active site of the ketoacyl synthase (KS) region. Its function is as follows. Fatty acid synthetase catalyzes the formation of long-chain fatty acids from acetyl-CoA, malonyl-CoA and NADPH. The alpha subunit contains domains for: acyl carrier protein, 3-oxoacyl-[acyl-carrier-protein] reductase, and 3-oxoacyl-[acyl-carrier-protein] synthase. This subunit coordinates the binding of the six beta subunits to the enzyme complex. This chain is Fatty acid synthase subunit alpha (FAS2), found in Saccharomyces cerevisiae (strain ATCC 204508 / S288c) (Baker's yeast).